The sequence spans 265 residues: 3-methyl-2-oxobutanoate hydroxymethyltransferase (265 aa).

Mg(2+)-binding residues include aspartate 44 and aspartate 83. 3-methyl-2-oxobutanoate-binding positions include 44-45 (DS), aspartate 83, and lysine 113. Glutamate 115 contacts Mg(2+). Glutamate 183 acts as the Proton acceptor in catalysis.

This sequence belongs to the PanB family. In terms of assembly, homodecamer; pentamer of dimers. The cofactor is Mg(2+).

It is found in the cytoplasm. The catalysed reaction is 3-methyl-2-oxobutanoate + (6R)-5,10-methylene-5,6,7,8-tetrahydrofolate + H2O = 2-dehydropantoate + (6S)-5,6,7,8-tetrahydrofolate. It functions in the pathway cofactor biosynthesis; (R)-pantothenate biosynthesis; (R)-pantoate from 3-methyl-2-oxobutanoate: step 1/2. Functionally, catalyzes the reversible reaction in which hydroxymethyl group from 5,10-methylenetetrahydrofolate is transferred onto alpha-ketoisovalerate to form ketopantoate. The sequence is that of 3-methyl-2-oxobutanoate hydroxymethyltransferase from Leptospira interrogans serogroup Icterohaemorrhagiae serovar copenhageni (strain Fiocruz L1-130).